Consider the following 1094-residue polypeptide: Probable serine/threonine-protein kinase kinX (1094 aa).

Residues 22–281 (LDFISEIGSG…QTLKQIKTTL (260 aa)) enclose the Protein kinase domain. Residues 28 to 36 (IGSGGFGKV) and Lys-49 each bind ATP. The active-site Proton acceptor is the Asp-146. 2 disordered regions span residues 301–884 (TTNG…SVED) and 946–1083 (IKVE…PNNK). Over residues 330 to 344 (YDDDDDDDDDDDDND) the composition is skewed to acidic residues. Over residues 351-373 (SDNSNSNVTLESNSNYNSSTING) the composition is skewed to polar residues. Positions 374 to 387 (QEQQEQQEQQQQQQ) are enriched in low complexity. Residues 393 to 408 (DEGEIEQDDDNIEVYD) are compositionally biased toward acidic residues. The span at 410-424 (DYQKKLEEHQKELLE) shows a compositional bias: basic and acidic residues. 3 stretches are compositionally biased toward acidic residues: residues 433-454 (STDE…EEEQ), 480-496 (DDED…EGDE), and 503-523 (DFDE…DEDE). Composition is skewed to low complexity over residues 526-542 (IQYY…LQKQ) and 564-585 (RQLQ…QHQQ). Positions 587 to 602 (YDDDDDDDDEEEEEYD) are enriched in acidic residues. The segment covering 603-639 (DVIRHDTDSEEESKDKTPLPWDQHFEKQKESENKVEQ) has biased composition (basic and acidic residues). The segment covering 650 to 661 (QETEQQQQQQQQ) has biased composition (low complexity). A compositionally biased stretch (basic and acidic residues) spans 670-801 (PTKVEDVKVE…EPVEEVKVEE (132 aa)). The interval 676–978 (VKVETEEQTK…PVKVEVASPV (303 aa)) is 40 X 9 AA approximate repeats of V-K-V-E-E-P-V-E-E. Positions 802–816 (PVEEVEAEESVQEPV) are enriched in acidic residues. Basic and acidic residues-rich tracts occupy residues 817–884 (EEVK…SVED) and 946–971 (IKVE…EPVK). 2 stretches are compositionally biased toward low complexity: residues 972-985 (VEVA…QPPQ) and 992-1011 (VVST…SNSP). Positions 1016–1031 (VKQPQQQEIEVNSTPI) are enriched in polar residues. A compositionally biased stretch (low complexity) spans 1032–1050 (KQQQQQQQTPTQQTQTPTK).

The protein belongs to the protein kinase superfamily. TKL Ser/Thr protein kinase family.

The enzyme catalyses L-seryl-[protein] + ATP = O-phospho-L-seryl-[protein] + ADP + H(+). It carries out the reaction L-threonyl-[protein] + ATP = O-phospho-L-threonyl-[protein] + ADP + H(+). This is Probable serine/threonine-protein kinase kinX (kinX) from Dictyostelium discoideum (Social amoeba).